The chain runs to 141 residues: MEMLQGLLLWLLLSMGGARASREPLRPLCRPINATLAAEKEACPVCITVNTSICAGYCPTMMRVLQAALLPLPQVVCTYHEVRFDSIQLPGCLPGVDPVVSFPVALSCRCGPCHRSTSDCGGPKDHPLTCDHPQLPGLLFL.

The signal sequence occupies residues 1 to 20; it reads MEMLQGLLLWLLLSMGGARA. Intrachain disulfides connect C29–C77, C43–C92, C46–C130, C54–C108, C58–C110, and C113–C120. N33 and N50 each carry an N-linked (GlcNAc...) asparagine glycan.

The protein belongs to the glycoprotein hormones subunit beta family. As to quaternary structure, heterodimer of a common alpha chain and a unique beta chain which confers biological specificity to thyrotropin, lutropin, follitropin and gonadotropin.

Its subcellular location is the secreted. Functionally, promotes spermatogenesis and ovulation by stimulating the testes and ovaries to synthesize steroids. This Macaca fascicularis (Crab-eating macaque) protein is Lutropin subunit beta (LHB).